Reading from the N-terminus, the 255-residue chain is Imidazole glycerol phosphate synthase subunit HisF (255 aa).

Active-site residues include D11 and D130.

Belongs to the HisA/HisF family. In terms of assembly, heterodimer of HisH and HisF.

It is found in the cytoplasm. The catalysed reaction is 5-[(5-phospho-1-deoxy-D-ribulos-1-ylimino)methylamino]-1-(5-phospho-beta-D-ribosyl)imidazole-4-carboxamide + L-glutamine = D-erythro-1-(imidazol-4-yl)glycerol 3-phosphate + 5-amino-1-(5-phospho-beta-D-ribosyl)imidazole-4-carboxamide + L-glutamate + H(+). It functions in the pathway amino-acid biosynthesis; L-histidine biosynthesis; L-histidine from 5-phospho-alpha-D-ribose 1-diphosphate: step 5/9. Its function is as follows. IGPS catalyzes the conversion of PRFAR and glutamine to IGP, AICAR and glutamate. The HisF subunit catalyzes the cyclization activity that produces IGP and AICAR from PRFAR using the ammonia provided by the HisH subunit. This is Imidazole glycerol phosphate synthase subunit HisF from Syntrophotalea carbinolica (strain DSM 2380 / NBRC 103641 / GraBd1) (Pelobacter carbinolicus).